The chain runs to 91 residues: DNA/RNA-binding protein Alba (91 aa).

Position 11 is an N6-acetyllysine (Lys-11).

This sequence belongs to the histone-like Alba family. In terms of processing, acetylated. Acetylation at Lys-11 decreases DNA-binding affinity.

The protein localises to the cytoplasm. The protein resides in the chromosome. In terms of biological role, binds double-stranded DNA tightly but without sequence specificity. Incubation with DNA in vitro gives fibrous structures 10.3 +/- 1.1 nm in thickness (naked DNA is 1.83 +/- 0.37 nm). This protein does not significantly compact DNA. The polypeptide is DNA/RNA-binding protein Alba (Thermococcus kodakarensis (strain ATCC BAA-918 / JCM 12380 / KOD1) (Pyrococcus kodakaraensis (strain KOD1))).